The following is a 389-amino-acid chain: Leucine aminopeptidase 1 (389 aa).

The signal sequence occupies residues 1–18; sequence MKSAALLLPLYAAAFAAA. A propeptide spanning residues 19 to 89 is cleaved from the precursor; that stretch reads AFHHEHAQAV…TLKRRINAAS (71 aa). N-linked (GlcNAc...) asparagine glycosylation occurs at Asn-99. Residues His-188, Asp-207, Glu-246, and Asp-273 each contribute to the Zn(2+) site. A disulfide bridge links Cys-322 with Cys-326. Zn(2+) is bound at residue His-355.

It belongs to the peptidase M28 family. M28E subfamily. In terms of assembly, monomer. It depends on Zn(2+) as a cofactor.

The protein localises to the secreted. Extracellular aminopeptidase that allows assimilation of proteinaceous substrates. The polypeptide is Leucine aminopeptidase 1 (lap1) (Pyrenophora teres f. teres (strain 0-1) (Barley net blotch fungus)).